Reading from the N-terminus, the 640-residue chain is UvrABC system protein C (640 aa).

A GIY-YIG domain is found at 35 to 113 (DAPGVYRMIG…IKQLKPRFNV (79 aa)). The UVR domain maps to 223 to 258 (RAVMATMAKAMEEAAEELEFERAARLRDRIRALSAV).

The protein belongs to the UvrC family. Interacts with UvrB in an incision complex.

It localises to the cytoplasm. In terms of biological role, the UvrABC repair system catalyzes the recognition and processing of DNA lesions. UvrC both incises the 5' and 3' sides of the lesion. The N-terminal half is responsible for the 3' incision and the C-terminal half is responsible for the 5' incision. This chain is UvrABC system protein C, found in Caulobacter vibrioides (strain ATCC 19089 / CIP 103742 / CB 15) (Caulobacter crescentus).